The sequence spans 396 residues: Elongation factor Tu (396 aa).

In terms of domain architecture, tr-type G spans 11 to 205 (KPHVNIGTIG…TVDEYIPTPE (195 aa)). The segment at 20-27 (GHVDHGKT) is G1. 20–27 (GHVDHGKT) is a GTP binding site. T27 provides a ligand contact to Mg(2+). The tract at residues 61–65 (GITIN) is G2. A G3 region spans residues 82-85 (DAPG). Residues 82–86 (DAPGH) and 137–140 (NKVD) contribute to the GTP site. The G4 stretch occupies residues 137–140 (NKVD). The interval 175 to 177 (SAL) is G5.

The protein belongs to the TRAFAC class translation factor GTPase superfamily. Classic translation factor GTPase family. EF-Tu/EF-1A subfamily. In terms of assembly, monomer.

It localises to the cytoplasm. The catalysed reaction is GTP + H2O = GDP + phosphate + H(+). In terms of biological role, GTP hydrolase that promotes the GTP-dependent binding of aminoacyl-tRNA to the A-site of ribosomes during protein biosynthesis. The polypeptide is Elongation factor Tu (Lactobacillus johnsonii (strain CNCM I-12250 / La1 / NCC 533)).